A 760-amino-acid polypeptide reads, in one-letter code: U-box domain-containing protein 3 (760 aa).

A coiled-coil region spans residues 146 to 217 (LMELMENALR…EQTEQLIELV (72 aa)). A U-box domain is found at 237–311 (SIPPYFRCPL…ASWLEANRIN (75 aa)). Over residues 424–434 (ILGNHQSSSEM) the composition is skewed to polar residues. Residues 424–448 (ILGNHQSSSEMSPKKNLESSNNVNH) are disordered. ARM repeat units lie at residues 504–543 (IENRVHIGRCGAITPLLSLLYSEEKLTQEHAVTALLNLSI), 545–584 (ELNKAMIVEVGAIEPLVHVLNTGNDRAKENSAASLFSLSV), 586–626 (QVNR…NLSI), 628–666 (HDNKARIVQAKAVKYLVELLDPDLEMVDKAVALLANLSA), and 668–707 (GEGRQAIVREGGIPLLVETVDLGSQRGKENAASVLLQLCL).

The catalysed reaction is S-ubiquitinyl-[E2 ubiquitin-conjugating enzyme]-L-cysteine + [acceptor protein]-L-lysine = [E2 ubiquitin-conjugating enzyme]-L-cysteine + N(6)-ubiquitinyl-[acceptor protein]-L-lysine.. Its pathway is protein modification; protein ubiquitination. Functionally, functions as an E3 ubiquitin ligase. This Arabidopsis thaliana (Mouse-ear cress) protein is U-box domain-containing protein 3 (PUB3).